The primary structure comprises 522 residues: 2-isopropylmalate synthase (522 aa).

The Pyruvate carboxyltransferase domain maps to 5 to 267 (VIIFDTTLRD…ETGINAKEIH (263 aa)). 4 residues coordinate Mn(2+): aspartate 14, histidine 202, histidine 204, and asparagine 238. Residues 392–522 (QLRQLVVQSD…MHKNRELGGV (131 aa)) form a regulatory domain region.

The protein belongs to the alpha-IPM synthase/homocitrate synthase family. LeuA type 1 subfamily. As to quaternary structure, homodimer. Mn(2+) is required as a cofactor.

Its subcellular location is the cytoplasm. It carries out the reaction 3-methyl-2-oxobutanoate + acetyl-CoA + H2O = (2S)-2-isopropylmalate + CoA + H(+). It participates in amino-acid biosynthesis; L-leucine biosynthesis; L-leucine from 3-methyl-2-oxobutanoate: step 1/4. Its function is as follows. Catalyzes the condensation of the acetyl group of acetyl-CoA with 3-methyl-2-oxobutanoate (2-ketoisovalerate) to form 3-carboxy-3-hydroxy-4-methylpentanoate (2-isopropylmalate). The protein is 2-isopropylmalate synthase of Shewanella oneidensis (strain ATCC 700550 / JCM 31522 / CIP 106686 / LMG 19005 / NCIMB 14063 / MR-1).